Here is a 192-residue protein sequence, read N- to C-terminus: ATP-dependent Clp protease proteolytic subunit 1 (192 aa).

Catalysis depends on Ser92, which acts as the Nucleophile. His117 is an active-site residue.

The protein belongs to the peptidase S14 family. As to quaternary structure, fourteen ClpP subunits assemble into 2 heptameric rings which stack back to back to give a disk-like structure with a central cavity, resembling the structure of eukaryotic proteasomes.

Its subcellular location is the cytoplasm. It catalyses the reaction Hydrolysis of proteins to small peptides in the presence of ATP and magnesium. alpha-casein is the usual test substrate. In the absence of ATP, only oligopeptides shorter than five residues are hydrolyzed (such as succinyl-Leu-Tyr-|-NHMec, and Leu-Tyr-Leu-|-Tyr-Trp, in which cleavage of the -Tyr-|-Leu- and -Tyr-|-Trp bonds also occurs).. Functionally, cleaves peptides in various proteins in a process that requires ATP hydrolysis. Has a chymotrypsin-like activity. Plays a major role in the degradation of misfolded proteins. This chain is ATP-dependent Clp protease proteolytic subunit 1, found in Chlamydia trachomatis serovar D (strain ATCC VR-885 / DSM 19411 / UW-3/Cx).